Reading from the N-terminus, the 321-residue chain is MIYARIAGTGSFLPGEPITNDDLVARGIDTSDQWIIERTGIRSRHLASAEMSSSDLAKTASERALDAAGVRPDDIDLIIVATSTPDCIFPSTAALLQSKLGIRNGAAAFDVQAVCSGFVYGLTIAEKFIRSGSHKRALVVGAEVFSRILDWSDRGTCVLFGDGAGAVVLEAAEAPGILASALHADGSHHPILCVPGAVAAGQVVGDPFLRMDGQAVFKFAVRVLGDVALEVLDQAGVTVDSVDWLIPHQANIRILQATARRLGVSMDKVITTVDHHGNTSAASIPLALDLAVRDGRIRPGHRFIIEGVGGGFTWGAALLQF.

Catalysis depends on residues cysteine 115 and histidine 248. The ACP-binding stretch occupies residues 249 to 253 (QANIR). Asparagine 278 is an active-site residue.

The protein belongs to the thiolase-like superfamily. FabH family. As to quaternary structure, homodimer.

The protein localises to the cytoplasm. The enzyme catalyses malonyl-[ACP] + acetyl-CoA + H(+) = 3-oxobutanoyl-[ACP] + CO2 + CoA. The protein operates within lipid metabolism; fatty acid biosynthesis. Functionally, catalyzes the condensation reaction of fatty acid synthesis by the addition to an acyl acceptor of two carbons from malonyl-ACP. Catalyzes the first condensation reaction which initiates fatty acid synthesis and may therefore play a role in governing the total rate of fatty acid production. Possesses both acetoacetyl-ACP synthase and acetyl transacylase activities. Its substrate specificity determines the biosynthesis of branched-chain and/or straight-chain of fatty acids. This is Beta-ketoacyl-[acyl-carrier-protein] synthase III from Aromatoleum aromaticum (strain DSM 19018 / LMG 30748 / EbN1) (Azoarcus sp. (strain EbN1)).